A 634-amino-acid chain; its full sequence is Tyrosine-protein kinase transforming protein erbB (634 aa).

In terms of domain architecture, Protein kinase spans 132–399 (FKKVKVLGSG…KMARDPPRYL (268 aa)). ATP-binding positions include 138-146 (LGSGAFGTV) and K165. D257 serves as the catalytic Proton acceptor.

This sequence belongs to the protein kinase superfamily. Tyr protein kinase family. EGF receptor subfamily.

The catalysed reaction is L-tyrosyl-[protein] + ATP = O-phospho-L-tyrosyl-[protein] + ADP + H(+). The protein is Tyrosine-protein kinase transforming protein erbB (V-ERBB) of Avian leukosis virus (ALV).